Here is a 496-residue protein sequence, read N- to C-terminus: Lysine--tRNA ligase (496 aa).

Mg(2+)-binding residues include glutamate 409 and glutamate 416.

This sequence belongs to the class-II aminoacyl-tRNA synthetase family. In terms of assembly, homodimer. Mg(2+) is required as a cofactor.

The protein resides in the cytoplasm. It catalyses the reaction tRNA(Lys) + L-lysine + ATP = L-lysyl-tRNA(Lys) + AMP + diphosphate. In Streptococcus pneumoniae serotype 4 (strain ATCC BAA-334 / TIGR4), this protein is Lysine--tRNA ligase.